The following is a 218-amino-acid chain: Thiopurine S-methyltransferase (218 aa).

S-adenosyl-L-methionine-binding residues include Trp10, Leu45, Glu66, and Arg123.

It belongs to the class I-like SAM-binding methyltransferase superfamily. TPMT family.

It localises to the cytoplasm. It catalyses the reaction S-adenosyl-L-methionine + a thiopurine = S-adenosyl-L-homocysteine + a thiopurine S-methylether.. This Shewanella baltica (strain OS185) protein is Thiopurine S-methyltransferase.